A 777-amino-acid chain; its full sequence is Ribosome-releasing factor 2, mitochondrial (777 aa).

Residues 68-353 (AKIRNIGIMA…AITMYLPSPE (286 aa)) form the tr-type G domain. GTP-binding positions include 77–84 (AHIDAGKT), 141–145 (DTPGH), and 195–198 (NKMD).

This sequence belongs to the TRAFAC class translation factor GTPase superfamily. Classic translation factor GTPase family. EF-G/EF-2 subfamily.

The protein localises to the mitochondrion. It carries out the reaction GTP + H2O = GDP + phosphate + H(+). In terms of biological role, mitochondrial GTPase that mediates the disassembly of ribosomes from messenger RNA at the termination of mitochondrial protein biosynthesis. Acts in collaboration with MRRF. GTP hydrolysis follows the ribosome disassembly and probably occurs on the ribosome large subunit. Not involved in the GTP-dependent ribosomal translocation step during translation elongation. This Bos taurus (Bovine) protein is Ribosome-releasing factor 2, mitochondrial.